A 300-amino-acid polypeptide reads, in one-letter code: Lysenin-related protein 1 (300 aa).

Residues 12-35 (EEIEVDVVSVWKEGYAYENRGNSS) are N-terminal cap domain. Residues 36–109 (VQQKITMTKG…SQVIEHTVTI (74 aa)) are beta-hairpin domain. Residues 110–158 (PPNKKFTRWKLNADVGGTGIEYMYLIDEVTAIGADLTIPEVNKSRAKIL) are N-terminal cap domain. Positions 159–299 (VGRQIHLGET…EDKWILEVVN (141 aa)) are C-terminal receptor-binding domain. Residues Lys-187, Ser-229, Tyr-235, and Tyr-284 each coordinate an N-(acyl)-sphingosylphosphocholine. Cysteines 274 and 285 form a disulfide.

Belongs to the lysenin family. As to quaternary structure, binds to sphingomyelin as a monomer by using its C-terminal domain. Forms a nonamer when sphingomyelin/LRP-1 ratio is lower than ca 500. Oligomerization, but not binding, is influenced by the fluidity of sphingomyelin. As to expression, expressed by coelomocytes.

Its subcellular location is the secreted. The protein localises to the target cell membrane. Its function is as follows. Pore-forming toxin that specifically binds sphingomyelin in the plasma membrane of various cells. Has hemolytic activity. Binding and hemolytic activities of this toxin are 10 times less than those of lysenin and lysenin-related protein 2. The chain is Lysenin-related protein 1 from Eisenia fetida (Red wiggler worm).